We begin with the raw amino-acid sequence, 261 residues long: High-affinity zinc uptake system membrane protein ZnuB (261 aa).

The next 7 membrane-spanning stretches (helical) occupy residues 8–28 (ALLTGIVLSLITAPLGVFVVW), 54–74 (VNPYIAIVVLTLILAIAMVWL), 84–104 (TLLGIIAHSCLSLGVVTVGLL), 125–145 (TDLIYIGIGVIIVLSTLIYFW), 171–191 (ILMILTALTIALSMKFVGALI), 214–234 (VGWAIIMSMLSIIGGLILSAF), and 236–256 (DTAAGPSVVICSAFLFVLSLF).

It belongs to the ABC-3 integral membrane protein family.

The protein resides in the cell inner membrane. Involved in the high-affinity zinc uptake transport system. The chain is High-affinity zinc uptake system membrane protein ZnuB (znuB) from Haemophilus influenzae (strain ATCC 51907 / DSM 11121 / KW20 / Rd).